A 558-amino-acid polypeptide reads, in one-letter code: NAD-dependent malic enzyme 2 (558 aa).

Catalysis depends on Y101, which acts as the Proton donor. R154 is an NAD(+) binding site. K172 (proton acceptor) is an active-site residue. E243, D244, and D267 together coordinate a divalent metal cation. Residues D267 and N411 each coordinate NAD(+).

The protein belongs to the malic enzymes family. Homotetramer. Requires Mg(2+) as cofactor. Mn(2+) serves as cofactor.

It catalyses the reaction (S)-malate + NAD(+) = pyruvate + CO2 + NADH. It carries out the reaction oxaloacetate + H(+) = pyruvate + CO2. This Photobacterium profundum (strain SS9) protein is NAD-dependent malic enzyme 2.